A 319-amino-acid chain; its full sequence is tRNA uridine(34) hydroxylase (319 aa).

The region spanning 127–221 (KQEDTVIIDA…YGKDPEVQGE (95 aa)) is the Rhodanese domain. Catalysis depends on Cys-181, which acts as the Cysteine persulfide intermediate.

The protein belongs to the TrhO family.

The catalysed reaction is uridine(34) in tRNA + AH2 + O2 = 5-hydroxyuridine(34) in tRNA + A + H2O. Catalyzes oxygen-dependent 5-hydroxyuridine (ho5U) modification at position 34 in tRNAs. The protein is tRNA uridine(34) hydroxylase of Bacillus anthracis (strain A0248).